Here is a 628-residue protein sequence, read N- to C-terminus: Basal cell adhesion molecule (628 aa).

An N-terminal signal peptide occupies residues Met1 to Ala31. 2 Ig-like V-type domains span residues Glu32–Asn142 and Pro147–His257. Residues Glu32 to Ala547 are Extracellular-facing. 3 disulfides stabilise this stretch: Cys53–Cys125, Cys172–Cys237, and Cys291–Cys337. Ig-like C2-type domains follow at residues Pro274–Glu355, Pro363–Thr441, and Pro448–Ser541. The segment at Glu309–Glu312 is interaction with laminin alpha5. N-linked (GlcNAc...) asparagine glycans are attached at residues Asn321, Asn377, Asn383, Asn419, and Asn439. Cys384 and Cys424 are joined by a disulfide. An intrachain disulfide couples Cys473 to Cys522. A helical membrane pass occupies residues Gly548–Phe568. The Cytoplasmic segment spans residues Tyr569–Cys628. The interval Cys579–Cys628 is disordered. Position 596 is a phosphoserine; by GSK3 (Ser596). Residue Ser598 is modified to Phosphoserine; by CK2. Ser600 bears the Phosphoserine mark. Residues Leu609 to Cys628 are compositionally biased toward gly residues. Ser621 bears the Phosphoserine; by PKA or PKB/AKT1 mark.

Homodimer. Interacts with ITGA4:ITGB1. Interacts with spectrins SPTA1 and SPTB1. Post-translationally, epinephrine-stimulated phosphorylation of Ser-621 by PKA enhances adhesion to laminin. Ser-621 can also be phosphorylated by AKT1. Wide tissue distribution (highest in the pancreas and very low in brain). Closely associated with the basal layer of cells in epithelia and the endothelium of blood vessel walls.

The protein localises to the cell membrane. Its function is as follows. Transmembrane glycoprotein that functions as both a receptor and an adhesion molecule playing a crucial role in cell adhesion, motility, migration and invasion. Extracellular domain enables binding to extracellular matrix proteins, such as laminin, integrin and other ligands while its intracellular domain interacts with cytoskeletal proteins like hemoglobin, facilitating cell signal transduction. Serves as a receptor for laminin alpha-5/LAMA5 to promote cell adhesion. Mechanistically, JAK2 induces BCAM phosphorylation and activates its adhesion to laminin by stimulating a Rap1/AKT signaling pathway in the absence of EPOR. The sequence is that of Basal cell adhesion molecule (BCAM) from Homo sapiens (Human).